A 55-amino-acid chain; its full sequence is uncharacterized protein (55 aa).

This is an uncharacterized protein from Mycoplasma mycoides.